Reading from the N-terminus, the 190-residue chain is Threonylcarbamoyl-AMP synthase (190 aa).

The region spanning 7-190 (TGSIAAAVDL…ALTGELFRQG (184 aa)) is the YrdC-like domain.

It belongs to the SUA5 family. TsaC subfamily.

It is found in the cytoplasm. The catalysed reaction is L-threonine + hydrogencarbonate + ATP = L-threonylcarbamoyladenylate + diphosphate + H2O. In terms of biological role, required for the formation of a threonylcarbamoyl group on adenosine at position 37 (t(6)A37) in tRNAs that read codons beginning with adenine. Catalyzes the conversion of L-threonine, HCO(3)(-)/CO(2) and ATP to give threonylcarbamoyl-AMP (TC-AMP) as the acyladenylate intermediate, with the release of diphosphate. In Salmonella arizonae (strain ATCC BAA-731 / CDC346-86 / RSK2980), this protein is Threonylcarbamoyl-AMP synthase.